A 400-amino-acid chain; its full sequence is Iron(III) enterobactin esterase (400 aa).

It belongs to the Fes family. Monomer.

It localises to the cytoplasm. It carries out the reaction Fe(III)-enterobactin + 3 H2O + H(+) = Fe(III)-[N-(2,3-dihydroxybenzoyl)-L-serine] + 2 N-(2,3-dihydroxybenzoyl)-L-serine. It catalyses the reaction Fe(III)-enterobactin + H2O = Fe(III)-[N-(2,3-dihydroxybenzoyl)-L-serine]3 + H(+). The enzyme catalyses Fe(III)-[N-(2,3-dihydroxybenzoyl)-L-serine]3 + H2O + H(+) = Fe(III)-[N-(2,3-dihydroxybenzoyl)-L-serine]2 + N-(2,3-dihydroxybenzoyl)-L-serine. The catalysed reaction is Fe(III)-[N-(2,3-dihydroxybenzoyl)-L-serine]2 + H2O + H(+) = Fe(III)-[N-(2,3-dihydroxybenzoyl)-L-serine] + N-(2,3-dihydroxybenzoyl)-L-serine. It carries out the reaction enterobactin + 3 H2O = 3 N-(2,3-dihydroxybenzoyl)-L-serine + 2 H(+). Its activity is regulated as follows. Inhibited by N-ethylmaleimide. Functionally, catalyzes the hydrolysis of ferric enterobactin (Fe-Ent). Is responsible for the release of iron from ferric enterobactin. Also catalyzes the hydrolysis of iron-free enterobactin (Ent). Cleavage of ferric enterobactin results in a mixture of three hydrolysis products, 2,3-dihydroxybenzoylserine (DHBS), the linear dimer (DHBS)2 and the linear trimer (DHBS)3, while cleavage of iron-free enterobactin yields only the monomer. Hydrolysis of ferric enterobactin is less efficient than hydrolysis of unliganded enterobactin. It also cleaves the aluminum (III) complex at a rate similar to the ferric complex. The protein is Iron(III) enterobactin esterase of Escherichia coli (strain K12).